We begin with the raw amino-acid sequence, 228 residues long: Prolactin-2A1 (228 aa).

An N-terminal signal peptide occupies residues 1–28; that stretch reads MQLSVTHPCCRTLILLLVSNLLLWESEA. 2 cysteine pairs are disulfide-bonded: C87–C203 and C220–C228.

Belongs to the somatotropin/prolactin family. Expressed specifically in the placenta. Expression restricted to the junctional zone of the chorioallantoic placenta.

The protein localises to the secreted. The sequence is that of Prolactin-2A1 (Prl2a1) from Mus musculus (Mouse).